Reading from the N-terminus, the 390-residue chain is Succinyl-diaminopimelate desuccinylase 1 (390 aa).

H76 provides a ligand contact to Zn(2+). D78 is a catalytic residue. A Zn(2+)-binding site is contributed by D109. The active-site Proton acceptor is the E143. E144, E172, and H363 together coordinate Zn(2+).

The protein belongs to the peptidase M20A family. DapE subfamily. As to quaternary structure, homodimer. It depends on Zn(2+) as a cofactor. Requires Co(2+) as cofactor.

The enzyme catalyses N-succinyl-(2S,6S)-2,6-diaminopimelate + H2O = (2S,6S)-2,6-diaminopimelate + succinate. It functions in the pathway amino-acid biosynthesis; L-lysine biosynthesis via DAP pathway; LL-2,6-diaminopimelate from (S)-tetrahydrodipicolinate (succinylase route): step 3/3. Functionally, catalyzes the hydrolysis of N-succinyl-L,L-diaminopimelic acid (SDAP), forming succinate and LL-2,6-diaminopimelate (DAP), an intermediate involved in the bacterial biosynthesis of lysine and meso-diaminopimelic acid, an essential component of bacterial cell walls. The protein is Succinyl-diaminopimelate desuccinylase 1 of Alteromonas mediterranea (strain DSM 17117 / CIP 110805 / LMG 28347 / Deep ecotype).